The chain runs to 446 residues: Probable glycine dehydrogenase (decarboxylating) subunit 1 (446 aa).

Belongs to the GcvP family. N-terminal subunit subfamily. As to quaternary structure, the glycine cleavage system is composed of four proteins: P, T, L and H. In this organism, the P 'protein' is a heterodimer of two subunits.

It carries out the reaction N(6)-[(R)-lipoyl]-L-lysyl-[glycine-cleavage complex H protein] + glycine + H(+) = N(6)-[(R)-S(8)-aminomethyldihydrolipoyl]-L-lysyl-[glycine-cleavage complex H protein] + CO2. In terms of biological role, the glycine cleavage system catalyzes the degradation of glycine. The P protein binds the alpha-amino group of glycine through its pyridoxal phosphate cofactor; CO(2) is released and the remaining methylamine moiety is then transferred to the lipoamide cofactor of the H protein. This is Probable glycine dehydrogenase (decarboxylating) subunit 1 from Methylocella silvestris (strain DSM 15510 / CIP 108128 / LMG 27833 / NCIMB 13906 / BL2).